Consider the following 241-residue polypeptide: Eukaryotic translation initiation factor 3 subunit J (241 aa).

Residues 1–27 (MEEDWEQHGEKEEVPLPAKKPDANKWD) show a composition bias toward basic and acidic residues. A disordered region spans residues 1 to 99 (MEEDWEQHGE…ENMTPEQKLA (99 aa)). Positions 28-45 (GEDEEEEVKDSWEDEDEL) are enriched in acidic residues. Residues 31–119 (EEEEVKDSWE…ESDLKNALDT (89 aa)) adopt a coiled-coil conformation. 2 stretches are compositionally biased toward basic and acidic residues: residues 46–58 (EEKKDEEKVETPK) and 69–90 (IVEKEKQKHEEAERRRLEKEAE).

It belongs to the eIF-3 subunit J family. Component of the eukaryotic translation initiation factor 3 (eIF-3) complex.

The protein localises to the cytoplasm. Functionally, component of the eukaryotic translation initiation factor 3 (eIF-3) complex, which is involved in protein synthesis of a specialized repertoire of mRNAs and, together with other initiation factors, stimulates binding of mRNA and methionyl-tRNAi to the 40S ribosome. The eIF-3 complex specifically targets and initiates translation of a subset of mRNAs involved in cell proliferation. The sequence is that of Eukaryotic translation initiation factor 3 subunit J from Culex quinquefasciatus (Southern house mosquito).